A 23-amino-acid chain; its full sequence is Basic phospholipase A2 mangshantoxin (23 aa).

This sequence belongs to the phospholipase A2 family. Group II subfamily. It depends on Ca(2+) as a cofactor. In terms of processing, contains 7 disulfide bonds. In terms of tissue distribution, expressed by the venom gland.

It is found in the secreted. It catalyses the reaction a 1,2-diacyl-sn-glycero-3-phosphocholine + H2O = a 1-acyl-sn-glycero-3-phosphocholine + a fatty acid + H(+). Functionally, snake venom phospholipase A2 (PLA2) that displays presynaptic neurotoxicity. PLA2 catalyzes the calcium-dependent hydrolysis of the 2-acyl groups in 3-sn-phosphoglycerides. In Protobothrops mangshanensis (Mangshan pitviper), this protein is Basic phospholipase A2 mangshantoxin.